We begin with the raw amino-acid sequence, 182 residues long: NADH-quinone oxidoreductase subunit I (182 aa).

2 consecutive 4Fe-4S ferredoxin-type domains span residues 50–82 and 92–121; these read IILS…LQKA and EFFR…MTPD. The [4Fe-4S] cluster site is built by Cys-62, Cys-65, Cys-68, Cys-72, Cys-101, Cys-104, Cys-107, and Cys-111.

The protein belongs to the complex I 23 kDa subunit family. In terms of assembly, NDH-1 is composed of 14 different subunits. Subunits NuoA, H, J, K, L, M, N constitute the membrane sector of the complex. [4Fe-4S] cluster is required as a cofactor.

Its subcellular location is the cell inner membrane. The enzyme catalyses a quinone + NADH + 5 H(+)(in) = a quinol + NAD(+) + 4 H(+)(out). In terms of biological role, NDH-1 shuttles electrons from NADH, via FMN and iron-sulfur (Fe-S) centers, to quinones in the respiratory chain. The immediate electron acceptor for the enzyme in this species is believed to be ubiquinone. Couples the redox reaction to proton translocation (for every two electrons transferred, four hydrogen ions are translocated across the cytoplasmic membrane), and thus conserves the redox energy in a proton gradient. This chain is NADH-quinone oxidoreductase subunit I, found in Psychrobacter arcticus (strain DSM 17307 / VKM B-2377 / 273-4).